The following is a 72-amino-acid chain: DNA-directed RNA polymerase subunit omega (72 aa).

The protein belongs to the RNA polymerase subunit omega family. The RNAP catalytic core consists of 2 alpha, 1 beta, 1 beta' and 1 omega subunit. When a sigma factor is associated with the core the holoenzyme is formed, which can initiate transcription.

The enzyme catalyses RNA(n) + a ribonucleoside 5'-triphosphate = RNA(n+1) + diphosphate. Promotes RNA polymerase assembly. Latches the N- and C-terminal regions of the beta' subunit thereby facilitating its interaction with the beta and alpha subunits. The sequence is that of DNA-directed RNA polymerase subunit omega from Clostridium acetobutylicum (strain ATCC 824 / DSM 792 / JCM 1419 / IAM 19013 / LMG 5710 / NBRC 13948 / NRRL B-527 / VKM B-1787 / 2291 / W).